The chain runs to 481 residues: Putative cytochrome P450 520B1 (481 aa).

Cys-427 is a heme binding site.

Belongs to the cytochrome P450 family. Requires heme as cofactor.

This Dictyostelium discoideum (Social amoeba) protein is Putative cytochrome P450 520B1 (cyp520B1).